Consider the following 315-residue polypeptide: GTP cyclohydrolase MptA (315 aa).

The protein belongs to the GTP cyclohydrolase IV family. In terms of assembly, homodimer. Fe(2+) serves as cofactor.

It catalyses the reaction GTP + H2O = 7,8-dihydroneopterin 2',3'-cyclic phosphate + formate + diphosphate + H(+). The protein operates within cofactor biosynthesis; 5,6,7,8-tetrahydromethanopterin biosynthesis. In terms of biological role, converts GTP to 7,8-dihydro-D-neopterin 2',3'-cyclic phosphate, the first intermediate in the biosynthesis of coenzyme methanopterin. The chain is GTP cyclohydrolase MptA from Methanococcus maripaludis (strain C5 / ATCC BAA-1333).